A 66-amino-acid polypeptide reads, in one-letter code: Large ribosomal subunit protein uL29 (66 aa).

This sequence belongs to the universal ribosomal protein uL29 family.

This chain is Large ribosomal subunit protein uL29, found in Allorhizobium ampelinum (strain ATCC BAA-846 / DSM 112012 / S4) (Agrobacterium vitis (strain S4)).